Reading from the N-terminus, the 514-residue chain is Monocarboxylate transporter 10 (514 aa).

A disordered region spans residues 1–64 (MVPSQEEPAA…TGNQEPPEPP (64 aa)). At 1-65 (MVPSQEEPAA…GNQEPPEPPE (65 aa)) the chain is on the cytoplasmic side. A helical transmembrane segment spans residues 66-86 (GGWGWLVMLAAMWCNGSVFGI). The Extracellular portion of the chain corresponds to 87–113 (QNAYGVLFVSMLETFGAKDDDNMAFKA). A helical membrane pass occupies residues 114–134 (AWVGSLSMGMIFFCCPIVSVF). The Cytoplasmic segment spans residues 135-143 (TDMFGCRRT). Residues 144–164 (AVLGAAVGFVGLMSSSFVSSI) traverse the membrane as a helical segment. Residues 165–170 (EPLYFT) lie on the Extracellular side of the membrane. The chain crosses the membrane as a helical span at residues 171 to 191 (YGVVFACGCSFAYQPSLVILG). The Cytoplasmic portion of the chain corresponds to 192–199 (HYFKKRLG). The helical transmembrane segment at 200–220 (LVNGIVTAGSSVFTILLPLLL) threads the bilayer. At 221-227 (GNLTSTV) the chain is on the extracellular side. A helical membrane pass occupies residues 228-248 (GLCYTLRILCIFMFVLFLAGF). Residues 249–290 (TYRPLVPSSKEKESEDSRSSFFSRRKLSPPKKIFNFALFKET) lie on the Cytoplasmic side of the membrane. A Phosphoserine modification is found at serine 262. The helical transmembrane segment at 291 to 311 (AYAVWAAGIPLALFGYFVPYV) threads the bilayer. The Extracellular portion of the chain corresponds to 312–328 (HLMNHVKERFKDVNNKE). Residues 329-349 (VLFMCIGVTSGVGRLLFGRIA) traverse the membrane as a helical segment. Aspartate 350 is a topological domain (cytoplasmic). Residues 351-371 (YLPGVKKVYLQVLSFFFIGLT) traverse the membrane as a helical segment. Topologically, residues 372 to 395 (SMMIPLCSVFGALIALCLIMGLFD) are extracellular. A helical membrane pass occupies residues 396-416 (GCFISIMAPIAFELVGPQDAS). Residues 417 to 418 (QA) lie on the Cytoplasmic side of the membrane. A helical transmembrane segment spans residues 419–439 (IGFLLGFMSIPMTVGPPVAGL). Over 440-450 (LHDKLGSYDLA) the chain is Extracellular. Residues 451 to 471 (FYLAGIPPFIGGAVLCLIPWI) form a helical membrane-spanning segment. Over 472–514 (HSKKQREISKNTGGEKMEKMLANQSSLLSSSSGIFKKESDSII) the chain is Cytoplasmic. Residues serine 497, serine 500, serine 502, and serine 503 each carry the phosphoserine modification.

It belongs to the major facilitator superfamily. Monocarboxylate porter (TC 2.A.1.13) family. Post-translationally, not N-glycosylated. In terms of tissue distribution, strongly expressed in intestine, placenta and liver. In small intestine is detected in the basolateral membrane (at protein level).

The protein resides in the cell membrane. The protein localises to the basolateral cell membrane. The enzyme catalyses L-tryptophan(in) = L-tryptophan(out). It carries out the reaction L-tyrosine(in) = L-tyrosine(out). It catalyses the reaction L-phenylalanine(in) = L-phenylalanine(out). The catalysed reaction is 3,3',5-triiodo-L-thyronine(out) = 3,3',5-triiodo-L-thyronine(in). The enzyme catalyses L-thyroxine(out) = L-thyroxine(in). In terms of biological role, sodium- and proton-independent thyroid hormones and aromatic acids transporter. Mediates both uptake and efflux of 3,5,3'-triiodothyronine (T3) and 3,5,3',5'-tetraiodothyronine (T4) with high affinity, suggesting a role in the homeostasis of thyroid hormone levels. Responsible for low affinity bidirectional transport of the aromatic amino acids, such as phenylalanine, tyrosine, tryptophan and L-3,4-dihydroxyphenylalanine (L-dopa). Plays an important role in homeostasis of aromatic amino acids. This chain is Monocarboxylate transporter 10 (Slc16a10), found in Rattus norvegicus (Rat).